A 392-amino-acid polypeptide reads, in one-letter code: Multidrug resistance protein MdtL (392 aa).

A run of 12 helical transmembrane segments spans residues 4–24, 38–58, 70–90, 95–115, 131–151, 158–178, 209–229, 246–266, 270–290, 294–314, 331–351, and 357–377; these read FLLCSFALVLLYPSGIDMYLV, AQLHIAFSVYLAGMASAMLFA, VAIVGAVIFVVASLLCAQAHA, LVGRFIQGIGAGSCYVVAFAI, LLNGITCIIPVLAPVLGHLIM, SLFYTMTGMGVMVGLLSVFIL, ILITTLSVTAILTYVNVSPVL, ALMAMISMAVSFSTPFALSLF, TLMLTSQVLFLAAGLALSLAT, LTLIGLGMICAGFSVGFGVAM, VLGIAQVCGSSLWIWLAAIIG, and MLIGILIACSIVSLVLLLVVT.

It belongs to the major facilitator superfamily. DHA1 family. MdtL (TC 2.A.1.2.22) subfamily.

It localises to the cell inner membrane. This Klebsiella pneumoniae (strain 342) protein is Multidrug resistance protein MdtL.